A 345-amino-acid chain; its full sequence is MTMETVESQHDGSITASLTESKSAHVQTQTGQNSIPALAQVSVAGSGTRRGSPAVTLVQLPSGQTIHVQGVIQTPQPWVIQSSEIHTVQVAAIAETDESAESEGVIDSHKRREILSRRPSYRKILNELSSDVPGVPKIEEERSEEEGTPPSIATMAVPTSIYQTSTGQYIAIAQGGTIQISNPGSDGVQGLQALTMTNSGAPPPGATIVQYAAQSADGTQQFFVPGSQVVVQDEETELAPSHMAAATGDMPTYQIRAPTAALPQGVVMAASPGSLHSPQQLAEEATRKRELRLMKNREAAKECRRRKKEYVKCLESRVAVLEVQNKKLIEELETLKDICSPKTDY.

One can recognise a KID domain in the interval 88–147 (VQVAAIAETDESAESEGVIDSHKRREILSRRPSYRKILNELSSDVPGVPKIEEERSEEEG). Phosphoserine occurs at positions 102, 129, 271, 274, and 277. In terms of domain architecture, bZIP spans 286-345 (TRKRELRLMKNREAAKECRRRKKEYVKCLESRVAVLEVQNKKLIEELETLKDICSPKTDY). Residues 287-312 (RKRELRLMKNREAAKECRRRKKEYVK) are basic motif. Residues 314 to 335 (LESRVAVLEVQNKKLIEELETL) are leucine-zipper.

This sequence belongs to the bZIP family. In terms of assembly, binds DNA as a dimer. Interacts with FHL5. Interacts with CDC34. May interact with TSSK4. Post-translationally, isoform 9 is ubiquitinated by CDC34 and RAD6B in order to be degraded by the proteasome. In terms of processing, stimulated by phosphorylation. Phosphorylated on Ser-116 by TSSK4 in vitro. As to expression, expressed in testes (round spermatids) (at protein level). Isoform 14 is the major activator form in testes.

It is found in the nucleus. The protein localises to the cytoplasm. In terms of biological role, transcriptional regulator that binds the cAMP response element (CRE), a sequence present in many viral and cellular promoters. Isoforms are either transcriptional activators or repressors. Plays a role in spermatogenesis and is involved in spermatid maturation. Its function is as follows. May play a role in the regulation of the circadian clock: acts as a transcriptional repressor of the core circadian component PER1 by directly binding to cAMP response elements in its promoter. In Homo sapiens (Human), this protein is cAMP-responsive element modulator.